Consider the following 222-residue polypeptide: Vesicle-associated membrane protein 724 (222 aa).

The Cytoplasmic portion of the chain corresponds to 1 to 197 (MGQESFIYSF…LWYQNMKIKL (197 aa)). In terms of domain architecture, Longin spans 10 to 115 (FVARGTMILA…SLNKEFGPVM (106 aa)). The v-SNARE coiled-coil homology domain occupies 131-191 (KLIKVKAQVS…TQVRRKLWYQ (61 aa)). A helical; Anchor for type IV membrane protein transmembrane segment spans residues 198–218 (VVLGILLLLVLIIWISVCHGF). The Vesicular portion of the chain corresponds to 219–222 (NCTD).

The protein belongs to the synaptobrevin family. In terms of tissue distribution, expressed in flowers, leaves, stems and roots.

It localises to the cell membrane. Its subcellular location is the early endosome membrane. In terms of biological role, involved in the targeting and/or fusion of transport vesicles to their target membrane. This is Vesicle-associated membrane protein 724 from Arabidopsis thaliana (Mouse-ear cress).